A 392-amino-acid chain; its full sequence is INCREASED PETAL GROWTH ANISOTROPY 1-like protein 1 (392 aa).

The stretch at 11–52 (LLRLVKELQAYLVRNDKLEKENHELRQEVARLRAQVSNLKSH) forms a coiled coil. 2 stretches are compositionally biased toward polar residues: residues 65 to 76 (QSSYDGSNTDGS) and 100 to 109 (PTIQGQSTAT). The segment at 65–128 (QSSYDGSNTD…SKRTLGKRSV (64 aa)) is disordered. Positions 269–299 (KDSLTQALQRIQSLQDRLEESVNNTEKMRDS) form a coiled coil.

Belongs to the IPGA1 family.

It is found in the cytoplasm. Its subcellular location is the cytoskeleton. Microtubule-associated protein probably involved in the regulation of microtubule organization. In Arabidopsis thaliana (Mouse-ear cress), this protein is INCREASED PETAL GROWTH ANISOTROPY 1-like protein 1.